The following is a 309-amino-acid chain: Glutamyl-Q tRNA(Asp) synthetase (309 aa).

L-glutamate-binding positions include 8 to 12 and E44; that span reads RFSPS. A 'HIGH' region motif is present at residues 11 to 21; sequence PSPTGPLHAGS. Residues C100, C102, Y126, and C130 each contribute to the Zn(2+) site. L-glutamate is bound by residues Y205 and R223. Positions 261-265 match the 'KMSKS' region motif; it reads KLSKQ. K264 contributes to the ATP binding site.

This sequence belongs to the class-I aminoacyl-tRNA synthetase family. GluQ subfamily. Zn(2+) is required as a cofactor.

In terms of biological role, catalyzes the tRNA-independent activation of glutamate in presence of ATP and the subsequent transfer of glutamate onto a tRNA(Asp). Glutamate is transferred on the 2-amino-5-(4,5-dihydroxy-2-cyclopenten-1-yl) moiety of the queuosine in the wobble position of the QUC anticodon. The sequence is that of Glutamyl-Q tRNA(Asp) synthetase from Albidiferax ferrireducens (strain ATCC BAA-621 / DSM 15236 / T118) (Rhodoferax ferrireducens).